Reading from the N-terminus, the 362-residue chain is Alkanal monooxygenase alpha chain (362 aa).

The protein belongs to the bacterial luciferase oxidoreductase family. As to quaternary structure, heterodimer of an alpha and a beta chain.

It catalyses the reaction a long-chain fatty aldehyde + FMNH2 + O2 = a long-chain fatty acid + hnu + FMN + H2O + 2 H(+). In terms of biological role, light-emitting reaction in luminous bacteria. The polypeptide is Alkanal monooxygenase alpha chain (luxA) (Photorhabdus luminescens (Xenorhabdus luminescens)).